A 927-amino-acid chain; its full sequence is Dual serine/threonine and tyrosine protein kinase (927 aa).

Residues 1-21 (MEADGQSWAGESVSGPGPGGG) form a disordered region. Positions 393–429 (RKKENELYESLMNIANRKQEEMKDMIVETLNTMKEEL) form a coiled coil. The Protein kinase domain occupies 650-904 (PKLGQELGRG…PLLGIVQPML (255 aa)). Residues 656–664 (LGRGQYGVV) and lysine 679 contribute to the ATP site. Aspartate 775 acts as the Proton acceptor in catalysis.

It belongs to the protein kinase superfamily. Ser/Thr protein kinase family. Expressed in brain, heart, skeletal muscle, kidney and lung. Expressed in maturing tubular epithelia, with the most prominent expression in the medulla and the papilla. Expressed in thin ascending limb of the loop of Henle and the distal convoluted tubule. Expressed in all layers of transitional ureteric epithelium and in the ureteric smooth-muscle cells (at protein level). Widely expressed. Highly expressed in many brain regions, including in cerebellum, olfactory, hippocampus and cerebral cortex.

Its subcellular location is the cytoplasm. The protein localises to the cell membrane. The protein resides in the apical cell membrane. It is found in the basolateral cell membrane. It localises to the cell junction. It carries out the reaction L-seryl-[protein] + ATP = O-phospho-L-seryl-[protein] + ADP + H(+). The catalysed reaction is L-threonyl-[protein] + ATP = O-phospho-L-threonyl-[protein] + ADP + H(+). It catalyses the reaction L-tyrosyl-[protein] + ATP = O-phospho-L-tyrosyl-[protein] + ADP + H(+). Acts as a positive regulator of ERK phosphorylation downstream of fibroblast growth factor-receptor activation. Involved in the regulation of both caspase-dependent apoptosis and caspase-independent cell death. In the skin, it plays a predominant role in suppressing caspase-dependent apoptosis in response to UV stress in a range of dermal cell types. In Mus musculus (Mouse), this protein is Dual serine/threonine and tyrosine protein kinase (Dstyk).